Here is a 1117-residue protein sequence, read N- to C-terminus: Cytospin-A (1117 aa).

Disordered stretches follow at residues 1–176 (MKKA…NQIS), 293–323 (SLSP…GSVE), and 358–390 (SSDD…NASE). The span at 45–90 (TAASLSKTKSSDDLLAGMAGGVTVTNGVKGKKSTCPSAAPSASAPA) shows a compositional bias: low complexity. The span at 93–117 (TVENKSKISTGTASSTKRSTSTGNK) shows a compositional bias: polar residues. Composition is skewed to basic and acidic residues over residues 120 to 131 (SSTRERLRERTR) and 158 to 171 (TATE…KSKS). The stretch at 168 to 280 (KSKSDNQISD…LNALGFSLEQ (113 aa)) forms a coiled coil. Residues 293-303 (SLSPEITPGNQ) are compositionally biased toward polar residues. Low complexity predominate over residues 358 to 377 (SSDDALDAPSSSESEGIPSI). Ser384, Ser385, and Ser389 each carry phosphoserine. 2 coiled-coil regions span residues 394–449 (ACLT…MESL) and 487–807 (RYME…RGRV). Residues Ser868, Ser881, and Ser887 each carry the phosphoserine modification. The tract at residues 920–997 (TSSASRPASL…PTTRSRIREE (78 aa)) is disordered. Residues 946–956 (RSSEEVKRDIS) show a composition bias toward basic and acidic residues. The segment covering 971-990 (TTSPQLSLSSSPTASVTPTT) has biased composition (low complexity). One can recognise a Calponin-homology (CH) domain in the interval 1011-1116 (GSKRNALLKW…YVTAIYKYFE (106 aa)).

This sequence belongs to the cytospin-A family. In terms of assembly, may interact with both microtubules and actin cytoskeleton.

The protein resides in the cytoplasm. Its subcellular location is the cytoskeleton. It is found in the spindle. It localises to the cell junction. The protein localises to the gap junction. Involved in cytokinesis and spindle organization. May play a role in actin cytoskeleton organization and microtubule stabilization and hence required for proper cell adhesion and migration. The chain is Cytospin-A (SPECC1L) from Homo sapiens (Human).